A 320-amino-acid chain; its full sequence is ATP-dependent 6-phosphofructokinase (320 aa).

G12 contacts ATP. ADP is bound by residues 22–26 (RGVVR) and 55–60 (RYSVSD). ATP is bound by residues 73-74 (RF) and 103-106 (GDGS). A Mg(2+)-binding site is contributed by D104. 126 to 128 (TID) contacts substrate. D128 functions as the Proton acceptor in the catalytic mechanism. R155 provides a ligand contact to ADP. Substrate contacts are provided by residues R163 and 170–172 (MGR). ADP-binding positions include 186 to 188 (GCE), K212, and 214 to 216 (KKH). Substrate is bound by residues E223, R244, and 250 to 253 (HIQR).

This sequence belongs to the phosphofructokinase type A (PFKA) family. ATP-dependent PFK group I subfamily. Prokaryotic clade 'B1' sub-subfamily. As to quaternary structure, homotetramer. The cofactor is Mg(2+).

The protein resides in the cytoplasm. The enzyme catalyses beta-D-fructose 6-phosphate + ATP = beta-D-fructose 1,6-bisphosphate + ADP + H(+). The protein operates within carbohydrate degradation; glycolysis; D-glyceraldehyde 3-phosphate and glycerone phosphate from D-glucose: step 3/4. With respect to regulation, allosterically activated by ADP and other diphosphonucleosides, and allosterically inhibited by phosphoenolpyruvate. Catalyzes the phosphorylation of D-fructose 6-phosphate to fructose 1,6-bisphosphate by ATP, the first committing step of glycolysis. This is ATP-dependent 6-phosphofructokinase from Sodalis glossinidius (strain morsitans).